We begin with the raw amino-acid sequence, 874 residues long: UPF0182 protein Sfum_2137 (874 aa).

7 helical membrane-spanning segments follow: residues 7–27, 57–77, 110–130, 171–191, 208–228, 252–272, and 283–303; these read WPLI…LSSL, IVFG…FWVA, SLWV…LPIF, RRLL…YLLE, LHLS…YVLQ, VIWA…FSMI, and PLVV…SAFL.

The protein belongs to the UPF0182 family.

The protein localises to the cell membrane. This chain is UPF0182 protein Sfum_2137, found in Syntrophobacter fumaroxidans (strain DSM 10017 / MPOB).